A 394-amino-acid polypeptide reads, in one-letter code: Elongation factor Tu (394 aa).

The region spanning 10 to 204 (KPHVNVGTIG…ALDTYIPEPE (195 aa)) is the tr-type G domain. The segment at 19–26 (GHVDHGKT) is G1. 19–26 (GHVDHGKT) contributes to the GTP binding site. Threonine 26 is a binding site for Mg(2+). The G2 stretch occupies residues 60-64 (GITIN). The segment at 81–84 (DCPG) is G3. Residues 81–85 (DCPGH) and 136–139 (NKCD) contribute to the GTP site. Positions 136–139 (NKCD) are G4. Positions 174–176 (SAL) are G5.

This sequence belongs to the TRAFAC class translation factor GTPase superfamily. Classic translation factor GTPase family. EF-Tu/EF-1A subfamily. In terms of assembly, monomer.

It localises to the cytoplasm. It catalyses the reaction GTP + H2O = GDP + phosphate + H(+). In terms of biological role, GTP hydrolase that promotes the GTP-dependent binding of aminoacyl-tRNA to the A-site of ribosomes during protein biosynthesis. In Shewanella sediminis (strain HAW-EB3), this protein is Elongation factor Tu.